We begin with the raw amino-acid sequence, 424 residues long: GDP-fucose protein O-fucosyltransferase 2 (424 aa).

Positions 1 to 20 (MHFFPIQLLVLFFAEKIAFA) are cleaved as a signal peptide. 51–55 (GEGFN) provides a ligand contact to GDP-beta-L-fucose. E52 acts as the Proton acceptor in catalysis. C154 and C187 are joined by a disulfide. N-linked (GlcNAc...) asparagine glycosylation is present at N205. GDP-beta-L-fucose-binding positions include 288–290 (HWR), D366, and 383–384 (TF). C407 and C414 are oxidised to a cystine.

This sequence belongs to the glycosyltransferase 68 family. As to expression, expressed in the anterior part of embryos, in the hypodermal and neuronal cells of the head. Expressed at different levels in a variety of cell types after hatching, including neuronal, hypodermal, muscle, intestinal, and somatic gonadal cells. Expressed in the nerve ring around the pharynx, in dorsal and ventral nerve cords, intestine, and a variety of hypodermal cells of L1-L3 larvae. Expressed in gonadal sheath cells, spermatheca, and tissues surrounding the vulva of adult hermaphrodites, and in the body wall muscle and hypodermal cells of adults of both sexes.

The protein resides in the endoplasmic reticulum. Its subcellular location is the golgi apparatus. The catalysed reaction is L-seryl-[protein] + GDP-beta-L-fucose = 3-O-(alpha-L-fucosyl)-L-seryl-[protein] + GDP + H(+). It catalyses the reaction L-threonyl-[protein] + GDP-beta-L-fucose = 3-O-(alpha-L-fucosyl)-L-threonyl-[protein] + GDP + H(+). The protein operates within protein modification; protein glycosylation. Catalyzes the reaction that attaches fucose through an O-glycosidic linkage to a conserved serine or threonine residue in the consensus sequence C1-X-X-S/T-C2 of thrombospondin type I repeats (TSRs) where C1 and C2 are the first and second cysteines of the repeat, respectively. O-fucosylates members of several protein families including the ADAMTS superfamily and the thrombospondin (TSP) and spondin families. The chain is GDP-fucose protein O-fucosyltransferase 2 (pad-2) from Caenorhabditis elegans.